The following is a 108-amino-acid chain: UPF0060 membrane protein Mvan_3406 (108 aa).

A run of 4 helical transmembrane segments spans residues 7 to 27, 32 to 52, 61 to 81, and 87 to 107; these read LLFV…WQGV, GLTW…VAAF, VLAA…VVAD, and RWDI…MYAP.

The protein belongs to the UPF0060 family.

The protein localises to the cell membrane. This chain is UPF0060 membrane protein Mvan_3406, found in Mycolicibacterium vanbaalenii (strain DSM 7251 / JCM 13017 / BCRC 16820 / KCTC 9966 / NRRL B-24157 / PYR-1) (Mycobacterium vanbaalenii).